We begin with the raw amino-acid sequence, 178 residues long: ATP-dependent protease subunit HslV (178 aa).

Thr-7 is an active-site residue. Na(+) is bound by residues Gly-162, Cys-165, and Thr-168.

The protein belongs to the peptidase T1B family. HslV subfamily. As to quaternary structure, a double ring-shaped homohexamer of HslV is capped on each side by a ring-shaped HslU homohexamer. The assembly of the HslU/HslV complex is dependent on binding of ATP.

It is found in the cytoplasm. It carries out the reaction ATP-dependent cleavage of peptide bonds with broad specificity.. Its activity is regulated as follows. Allosterically activated by HslU binding. Functionally, protease subunit of a proteasome-like degradation complex believed to be a general protein degrading machinery. This chain is ATP-dependent protease subunit HslV, found in Cupriavidus necator (strain ATCC 17699 / DSM 428 / KCTC 22496 / NCIMB 10442 / H16 / Stanier 337) (Ralstonia eutropha).